A 658-amino-acid polypeptide reads, in one-letter code: MGKFILDSQFAPAGDQPQAIQKITQFIHNGAQYSTLVGVTGSGKTYTMANIIANLNIPTLIMTHNKTLAAQLYSEFRGFFPKNHVEYFISHFDYYQPEAYIPRRDLFIEKDSSINEDLERLRLSATTSLLAYDDIIVIASVSANYGLGNPAEYLTMIHKFEIGQEEAQKTLLLKLVDMGYTRNDTIFERGNFRVNGEVIDIFPAYNEKEFIRIEFFGDEIERIGVFDALERTALTQLESFVLYAANQFIVGAQRLQSAIKNIEVELENRLEEFVSQDKQIEYQRLKTRTEFDLEMIKESGICKGIENYARHLTGKKAGETPYSLLDYFEQKGKPYLLIVDESHVSLPQFGGMYAGDRSRKEVLVEYGFRLPSALDNRPLRFDEFINKAPHFLFVSATPAQKELELSQEHIAEQIIRPTGLLDPLYEVRDADNAVLDLYDEIKARIAKNQRVLITTLTKKMAEELSKYYAELGIKVRYMHSDIDAIERNHLIRALRLGEFDVLIGINLLREGLDLPEVSLIAIMDADKEGFLRSETSLIQTMGRAARNVEGKVILYAKKITGSMQRAFEVTDYRRTKQEEFNRIHNITPKSVQRNVEQELKIESSGLSRLYEKASKKIPKSERESIIKELNIKMHQAAKALEFEEAARLRDEIARIRTM.

The 392-residue stretch at 25-416 (QFIHNGAQYS…QEHIAEQIIR (392 aa)) folds into the Helicase ATP-binding domain. ATP is bound at residue 38-45 (GVTGSGKT). The short motif at 91 to 114 (HFDYYQPEAYIPRRDLFIEKDSSI) is the Beta-hairpin element. In terms of domain architecture, Helicase C-terminal spans 433–607 (AVLDLYDEIK…ELKIESSGLS (175 aa)). Positions 623–658 (ESIIKELNIKMHQAAKALEFEEAARLRDEIARIRTM) constitute a UVR domain.

The protein belongs to the UvrB family. Forms a heterotetramer with UvrA during the search for lesions. Interacts with UvrC in an incision complex.

It localises to the cytoplasm. The UvrABC repair system catalyzes the recognition and processing of DNA lesions. A damage recognition complex composed of 2 UvrA and 2 UvrB subunits scans DNA for abnormalities. Upon binding of the UvrA(2)B(2) complex to a putative damaged site, the DNA wraps around one UvrB monomer. DNA wrap is dependent on ATP binding by UvrB and probably causes local melting of the DNA helix, facilitating insertion of UvrB beta-hairpin between the DNA strands. Then UvrB probes one DNA strand for the presence of a lesion. If a lesion is found the UvrA subunits dissociate and the UvrB-DNA preincision complex is formed. This complex is subsequently bound by UvrC and the second UvrB is released. If no lesion is found, the DNA wraps around the other UvrB subunit that will check the other stand for damage. In Helicobacter hepaticus (strain ATCC 51449 / 3B1), this protein is UvrABC system protein B.